Reading from the N-terminus, the 338-residue chain is 4'-phosphopantetheinyl transferase (338 aa).

This sequence belongs to the P-Pant transferase superfamily.

It carries out the reaction apo-[ACP] + CoA = holo-[ACP] + adenosine 3',5'-bisphosphate + H(+). Acyl-carrier-protein synthase that transfers the 4'-phosphopantetheine moiety from coenzyme A to a Ser of an acyl-carrier-protein. The 4'-phosphopantetheine (4'-PPT) portion of CoA provides the essential prosthetic group for a number of carrier proteins and multi-domain enzymes, priming them for the acceptance of acyl building blocks in fatty acid synthesis and many aspects of secondary metabolism mediated by polyketide synthases (PKSs) and non-ribosomal peptide synthetases (NRPSs). Plays a key role in liamocins biosynthesis by activationg the HR-PKS PKS1 that produces 3,5-dihydroxydecanoic acid, a precursor of liamocins. The chain is 4'-phosphopantetheinyl transferase from Aureobasidium melanogenum (Aureobasidium pullulans var. melanogenum).